A 212-amino-acid polypeptide reads, in one-letter code: Imidazole glycerol phosphate synthase subunit HisH (212 aa).

A Glutamine amidotransferase type-1 domain is found at Asp3 to Val212. Residue Cys82 is the Nucleophile of the active site. Active-site residues include His191 and Glu193.

Heterodimer of HisH and HisF.

The protein resides in the cytoplasm. The enzyme catalyses 5-[(5-phospho-1-deoxy-D-ribulos-1-ylimino)methylamino]-1-(5-phospho-beta-D-ribosyl)imidazole-4-carboxamide + L-glutamine = D-erythro-1-(imidazol-4-yl)glycerol 3-phosphate + 5-amino-1-(5-phospho-beta-D-ribosyl)imidazole-4-carboxamide + L-glutamate + H(+). It catalyses the reaction L-glutamine + H2O = L-glutamate + NH4(+). It participates in amino-acid biosynthesis; L-histidine biosynthesis; L-histidine from 5-phospho-alpha-D-ribose 1-diphosphate: step 5/9. Its function is as follows. IGPS catalyzes the conversion of PRFAR and glutamine to IGP, AICAR and glutamate. The HisH subunit catalyzes the hydrolysis of glutamine to glutamate and ammonia as part of the synthesis of IGP and AICAR. The resulting ammonia molecule is channeled to the active site of HisF. The chain is Imidazole glycerol phosphate synthase subunit HisH from Nitrosospira multiformis (strain ATCC 25196 / NCIMB 11849 / C 71).